Reading from the N-terminus, the 376-residue chain is uncharacterized protein (376 aa).

Belongs to the NAD(P)-dependent epimerase/dehydratase family.

This is an uncharacterized protein from Mycobacterium bovis (strain ATCC BAA-935 / AF2122/97).